Reading from the N-terminus, the 159-residue chain is Elicitor-responsive protein 1 (159 aa).

In terms of domain architecture, C2 spans 1-112 (MAGSGVLEVH…SLGMEHGTWE (112 aa)). The Ca(2+) site is built by D21 and D30. Position 44 is a phosphoserine; by CPK (S44). 4 residues coordinate Ca(2+): D81, D83, S86, and D89.

The cofactor is Ca(2+). Phosphorylated at Ser-44 by CPK18 in a calcium-dependent manner. As to expression, isoform 2 is expressed in young vascular tissues and tiller buds.

Its subcellular location is the cytoplasm. The protein localises to the cell membrane. Its function is as follows. May play a role in plant defense signaling. Isoform 2 binds to phospholipids in a Ca(2+)-dependent manner in response to pathogen elicitors. This chain is Elicitor-responsive protein 1 (ERG1), found in Oryza sativa subsp. japonica (Rice).